Reading from the N-terminus, the 957-residue chain is Glycine dehydrogenase (decarboxylating) 2 (957 aa).

K707 carries the N6-(pyridoxal phosphate)lysine modification.

It belongs to the GcvP family. As to quaternary structure, the glycine cleavage system is composed of four proteins: P, T, L and H. It depends on pyridoxal 5'-phosphate as a cofactor.

The enzyme catalyses N(6)-[(R)-lipoyl]-L-lysyl-[glycine-cleavage complex H protein] + glycine + H(+) = N(6)-[(R)-S(8)-aminomethyldihydrolipoyl]-L-lysyl-[glycine-cleavage complex H protein] + CO2. In terms of biological role, the glycine cleavage system catalyzes the degradation of glycine. The P protein binds the alpha-amino group of glycine through its pyridoxal phosphate cofactor; CO(2) is released and the remaining methylamine moiety is then transferred to the lipoamide cofactor of the H protein. This Pseudomonas putida (strain ATCC 47054 / DSM 6125 / CFBP 8728 / NCIMB 11950 / KT2440) protein is Glycine dehydrogenase (decarboxylating) 2 (gcvP2).